The chain runs to 221 residues: DNA mismatch repair protein MutH (221 aa).

Belongs to the MutH family.

It localises to the cytoplasm. Functionally, sequence-specific endonuclease that cleaves unmethylated GATC sequences. It is involved in DNA mismatch repair. This Vibrio cholerae serotype O1 (strain ATCC 39541 / Classical Ogawa 395 / O395) protein is DNA mismatch repair protein MutH.